A 274-amino-acid polypeptide reads, in one-letter code: 2,3,4,5-tetrahydropyridine-2,6-dicarboxylate N-succinyltransferase (274 aa).

Positions 104 and 141 each coordinate substrate.

The protein belongs to the transferase hexapeptide repeat family. Homotrimer.

The protein localises to the cytoplasm. The enzyme catalyses (S)-2,3,4,5-tetrahydrodipicolinate + succinyl-CoA + H2O = (S)-2-succinylamino-6-oxoheptanedioate + CoA. It functions in the pathway amino-acid biosynthesis; L-lysine biosynthesis via DAP pathway; LL-2,6-diaminopimelate from (S)-tetrahydrodipicolinate (succinylase route): step 1/3. This chain is 2,3,4,5-tetrahydropyridine-2,6-dicarboxylate N-succinyltransferase, found in Sodalis glossinidius (strain morsitans).